Reading from the N-terminus, the 476-residue chain is Cytochrome c oxidase subunit 1 (476 aa).

Residues 19 to 39 (LYYLWFSFLFGIYGFLLSVIL) form a helical membrane-spanning segment. Ca(2+) is bound at residue glutamate 42. Transmembrane regions (helical) follow at residues 61–81 (MIFTVHGIIMIFFNIMPGLFG), 105–125 (ISLLLQPIAFILVILSTAAEF), 144–164 (LSPVAVDVIVIGLLVSGIASI), 194–214 (LIITSIMLLLTLPVLTGGVLM), 240–260 (LLWFFGHPEVYILILPAFGII), 278–298 (MILAMGCIAVLGSVVWVHHMY), 309–329 (FFTSTTILISIPTGTKVFNWL), and 345–365 (LLSLLFICTFTFGGTTGVILG). Residue histidine 66 coordinates Fe(II)-heme a. A Cu cation-binding site is contributed by histidine 246. The segment at residues 246-250 (HPEVY) is a cross-link (1'-histidyl-3'-tyrosine (His-Tyr)). Tyrosine 250 serves as a coordination point for O2. Residues histidine 295 and histidine 296 each contribute to the Cu cation site. Mg(2+)-binding residues include histidine 374 and aspartate 375. 2 helical membrane passes run 379 to 399 (VIAHFHFVLSIGAIIALFTSV) and 415 to 435 (TIIVLWSILFFVGVVLTFLPM). Histidine 382 is a binding site for heme a3. Histidine 384 serves as a coordination point for Fe(II)-heme a. Residue proline 448 coordinates Ca(2+). A helical transmembrane segment spans residues 455–475 (NGWNMICSIGSTMTLFGLLIF).

Belongs to the heme-copper respiratory oxidase family. Component of the cytochrome c oxidase (complex IV, CIV), a multisubunit enzyme composed of a catalytic core of 3 subunits and several supernumerary subunits. The complex exists as a monomer or a dimer and forms supercomplexes (SCs) in the inner mitochondrial membrane with ubiquinol-cytochrome c oxidoreductase (cytochrome b-c1 complex, complex III, CIII). Heme serves as cofactor. The cofactor is Cu cation.

It localises to the mitochondrion inner membrane. The catalysed reaction is 4 Fe(II)-[cytochrome c] + O2 + 8 H(+)(in) = 4 Fe(III)-[cytochrome c] + 2 H2O + 4 H(+)(out). The protein operates within energy metabolism; oxidative phosphorylation. Its function is as follows. Component of the cytochrome c oxidase, the last enzyme in the mitochondrial electron transport chain which drives oxidative phosphorylation. The respiratory chain contains 3 multisubunit complexes succinate dehydrogenase (complex II, CII), ubiquinol-cytochrome c oxidoreductase (cytochrome b-c1 complex, complex III, CIII) and cytochrome c oxidase (complex IV, CIV), that cooperate to transfer electrons derived from NADH and succinate to molecular oxygen, creating an electrochemical gradient over the inner membrane that drives transmembrane transport and the ATP synthase. Cytochrome c oxidase is the component of the respiratory chain that catalyzes the reduction of oxygen to water. Electrons originating from reduced cytochrome c in the intermembrane space (IMS) are transferred via the dinuclear copper A center (CU(A)) of subunit 2 and heme A of subunit 1 to the active site in subunit 1, a binuclear center (BNC) formed by heme A3 and copper B (CU(B)). The BNC reduces molecular oxygen to 2 water molecules using 4 electrons from cytochrome c in the IMS and 4 protons from the mitochondrial matrix. The polypeptide is Cytochrome c oxidase subunit 1 (COI) (Plasmodium chabaudi).